Reading from the N-terminus, the 402-residue chain is Phosphopentomutase (402 aa).

Residues D10, D301, H306, D342, H343, and H354 each contribute to the Mn(2+) site.

The protein belongs to the phosphopentomutase family. Requires Mn(2+) as cofactor.

The protein resides in the cytoplasm. It catalyses the reaction 2-deoxy-alpha-D-ribose 1-phosphate = 2-deoxy-D-ribose 5-phosphate. It carries out the reaction alpha-D-ribose 1-phosphate = D-ribose 5-phosphate. The protein operates within carbohydrate degradation; 2-deoxy-D-ribose 1-phosphate degradation; D-glyceraldehyde 3-phosphate and acetaldehyde from 2-deoxy-alpha-D-ribose 1-phosphate: step 1/2. Its function is as follows. Isomerase that catalyzes the conversion of deoxy-ribose 1-phosphate (dRib-1-P) and ribose 1-phosphate (Rib-1-P) to deoxy-ribose 5-phosphate (dRib-5-P) and ribose 5-phosphate (Rib-5-P), respectively. The polypeptide is Phosphopentomutase (Aeromonas hydrophila subsp. hydrophila (strain ATCC 7966 / DSM 30187 / BCRC 13018 / CCUG 14551 / JCM 1027 / KCTC 2358 / NCIMB 9240 / NCTC 8049)).